We begin with the raw amino-acid sequence, 299 residues long: F-actin-capping protein subunit alpha-3 (299 aa).

Position 290 is a phosphoserine (Ser-290).

This sequence belongs to the F-actin-capping protein alpha subunit family. As to quaternary structure, component of the F-actin capping complex, composed of a heterodimer of an alpha and a beta subunit. Component of the WASH complex, composed of F-actin-capping protein subunit alpha (CAPZA1, CAPZA2 or CAPZA3), F-actin-capping protein subunit beta (CAPZB), WASH (WASHC1, WASH2P, WASH3P, WASH4P, WASH5P or WASH6P), WASHC2 (WASHC2A or WASHC2C), WASHC3, WASHC4 and WASHC5. Expressed exclusively in testis and sperm. Highest expression is found in the neck region of ejaculated sperm with lower levels found in the tail and postacrosome region.

It localises to the cytoplasm. The protein resides in the cytoskeleton. Its function is as follows. F-actin-capping proteins bind in a Ca(2+)-independent manner to the fast growing ends of actin filaments (barbed end) thereby blocking the exchange of subunits at these ends. Unlike other capping proteins (such as gelsolin and severin), these proteins do not sever actin filaments. May play a role in the morphogenesis of spermatid. The protein is F-actin-capping protein subunit alpha-3 (CAPZA3) of Homo sapiens (Human).